The primary structure comprises 292 residues: DCN1-like protein 4 (292 aa).

A disordered region spans residues 43 to 83 (HQTGSLRSCSSSDCFNKVMPPRKKRRPASGDDLSAKKSRHD). Positions 45-56 (TGSLRSCSSSDC) are enriched in polar residues. Lysine 95 participates in a covalent cross-link: Glycyl lysine isopeptide (Lys-Gly) (interchain with G-Cter in SUMO2). Residues 101–287 (FSSKRCLEWF…LLDEFVEWYK (187 aa)) enclose the DCUN1 domain.

In terms of assembly, interacts (via the DCUN1 domain) with the unneddylated cullins: interacts with CUL1, CUL2, CUL3, CUL4A, CUL4B and CUL5; these interactions promote the cullin neddylation and the identity of the cullin dictates the affinity of the interaction. Interacts with RBX1 and RNF7. Interacts with CAND1; this interaction is bridged by cullins such as CUL3 and strongly inhibits the neddylation of CUL3. These CAND-cullin-DCNL complexes can only be neddylated in the presence of a substrate adapter. Interacts (via DCUN1 domain) with UBE2M (N-terminally acetylated form) and probably with UBE2F (N-terminally acetylated form).

Its subcellular location is the nucleus. Its function is as follows. Contributes to the neddylation of all cullins by transferring NEDD8 from N-terminally acetylated NEDD8-conjugating E2s enzyme to different cullin C-terminal domain-RBX complexes which are necessary for the activation of cullin-RING E3 ubiquitin ligases (CRLs). The chain is DCN1-like protein 4 from Homo sapiens (Human).